Reading from the N-terminus, the 88-residue chain is ATP synthase subunit c 1 (88 aa).

The next 2 membrane-spanning stretches (helical) occupy residues 4–24 (FTWV…GTAI) and 53–73 (IGLA…MIIL).

Belongs to the ATPase C chain family. As to quaternary structure, F-type ATPases have 2 components, F(1) - the catalytic core - and F(0) - the membrane proton channel. F(1) has five subunits: alpha(3), beta(3), gamma(1), delta(1), epsilon(1). F(0) has three main subunits: a(1), b(2) and c(10-14). The alpha and beta chains form an alternating ring which encloses part of the gamma chain. F(1) is attached to F(0) by a central stalk formed by the gamma and epsilon chains, while a peripheral stalk is formed by the delta and b chains.

It localises to the cell inner membrane. F(1)F(0) ATP synthase produces ATP from ADP in the presence of a proton or sodium gradient. F-type ATPases consist of two structural domains, F(1) containing the extramembraneous catalytic core and F(0) containing the membrane proton channel, linked together by a central stalk and a peripheral stalk. During catalysis, ATP synthesis in the catalytic domain of F(1) is coupled via a rotary mechanism of the central stalk subunits to proton translocation. Its function is as follows. Key component of the F(0) channel; it plays a direct role in translocation across the membrane. A homomeric c-ring of between 10-14 subunits forms the central stalk rotor element with the F(1) delta and epsilon subunits. This is ATP synthase subunit c 1 from Syntrophotalea carbinolica (strain DSM 2380 / NBRC 103641 / GraBd1) (Pelobacter carbinolicus).